A 199-amino-acid chain; its full sequence is Large ribosomal subunit protein bL25 (199 aa).

It belongs to the bacterial ribosomal protein bL25 family. CTC subfamily. Part of the 50S ribosomal subunit; part of the 5S rRNA/L5/L18/L25 subcomplex. Contacts the 5S rRNA. Binds to the 5S rRNA independently of L5 and L18.

In terms of biological role, this is one of the proteins that binds to the 5S RNA in the ribosome where it forms part of the central protuberance. The chain is Large ribosomal subunit protein bL25 from Rickettsia akari (strain Hartford).